We begin with the raw amino-acid sequence, 1075 residues long: Putative type I restriction enzyme MjaVIIP endonuclease subunit (1075 aa).

It belongs to the HsdR family. The type I restriction/modification system is composed of three polypeptides R, M and S.

It carries out the reaction Endonucleolytic cleavage of DNA to give random double-stranded fragments with terminal 5'-phosphates, ATP is simultaneously hydrolyzed.. The restriction (R) subunit of a type I restriction enzyme that recognizes 5'-CAAN(7)TGG-3' and cleaves a random distance away. The R subunit is required for both endonuclease and ATPase activities but not for modification. After locating a non-methylated recognition site, the enzyme complex serves as a molecular motor that translocates DNA in an ATP-dependent manner until a collision occurs that triggers cleavage. This is Putative type I restriction enzyme MjaVIIP endonuclease subunit from Methanocaldococcus jannaschii (strain ATCC 43067 / DSM 2661 / JAL-1 / JCM 10045 / NBRC 100440) (Methanococcus jannaschii).